A 404-amino-acid chain; its full sequence is Phosphoglycerate kinase (404 aa).

Substrate-binding positions include 22–24, Arg37, 60–63, Arg120, and Arg160; these read DFN and HLGR. Residues Lys215, Glu333, and 360–363 contribute to the ATP site; that span reads GGDS.

The protein belongs to the phosphoglycerate kinase family. Monomer.

Its subcellular location is the cytoplasm. It carries out the reaction (2R)-3-phosphoglycerate + ATP = (2R)-3-phospho-glyceroyl phosphate + ADP. It participates in carbohydrate degradation; glycolysis; pyruvate from D-glyceraldehyde 3-phosphate: step 2/5. This chain is Phosphoglycerate kinase, found in Latilactobacillus sakei subsp. sakei (strain 23K) (Lactobacillus sakei subsp. sakei).